The following is a 368-amino-acid chain: Phospho-N-acetylmuramoyl-pentapeptide-transferase (368 aa).

10 helical membrane passes run 34–54 (GAVV…IDHL), 79–99 (TPTM…VLWA), 102–122 (LNPY…VGFY), 140–160 (ARIL…VRLG), 176–196 (LVIK…VGAG), 207–227 (GLAI…AYLA), 247–267 (LAVL…FNAP), 271–291 (IFMG…IAVA), 296–316 (IVLA…IVQV), and 345–365 (QIVI…LSTL).

This sequence belongs to the glycosyltransferase 4 family. MraY subfamily. Requires Mg(2+) as cofactor.

The protein localises to the cell inner membrane. It catalyses the reaction UDP-N-acetyl-alpha-D-muramoyl-L-alanyl-gamma-D-glutamyl-meso-2,6-diaminopimeloyl-D-alanyl-D-alanine + di-trans,octa-cis-undecaprenyl phosphate = di-trans,octa-cis-undecaprenyl diphospho-N-acetyl-alpha-D-muramoyl-L-alanyl-D-glutamyl-meso-2,6-diaminopimeloyl-D-alanyl-D-alanine + UMP. The protein operates within cell wall biogenesis; peptidoglycan biosynthesis. Its function is as follows. Catalyzes the initial step of the lipid cycle reactions in the biosynthesis of the cell wall peptidoglycan: transfers peptidoglycan precursor phospho-MurNAc-pentapeptide from UDP-MurNAc-pentapeptide onto the lipid carrier undecaprenyl phosphate, yielding undecaprenyl-pyrophosphoryl-MurNAc-pentapeptide, known as lipid I. In Bradyrhizobium sp. (strain BTAi1 / ATCC BAA-1182), this protein is Phospho-N-acetylmuramoyl-pentapeptide-transferase.